The chain runs to 311 residues: Small ribosomal subunit biogenesis GTPase RsgA (311 aa).

Residues 77 to 239 (LSKQSHIIAT…IIDTPGIKGF (163 aa)) form the CP-type G domain. Residues 126 to 129 (NKTD) and 180 to 188 (GHSGVGKST) each bind GTP. Residues Cys-263, Cys-268, His-270, and Cys-276 each coordinate Zn(2+).

Belongs to the TRAFAC class YlqF/YawG GTPase family. RsgA subfamily. Monomer. Associates with 30S ribosomal subunit, binds 16S rRNA. The cofactor is Zn(2+).

The protein localises to the cytoplasm. One of several proteins that assist in the late maturation steps of the functional core of the 30S ribosomal subunit. Helps release RbfA from mature subunits. May play a role in the assembly of ribosomal proteins into the subunit. Circularly permuted GTPase that catalyzes slow GTP hydrolysis, GTPase activity is stimulated by the 30S ribosomal subunit. The protein is Small ribosomal subunit biogenesis GTPase RsgA of Azobacteroides pseudotrichonymphae genomovar. CFP2.